Here is a 422-residue protein sequence, read N- to C-terminus: MSALSTLKKRLAACNRASQYKLETSLNPMPTFRLLRNTKWSWTHLQYVFLAGNLIFACIVIESPGFWGKFGIACLLAIALTVPLTRQIFFPAIVIITWAILFYSCRFIPERWRPPIWVRVLPTLENILYGSNLSSLLSKTTHSILDILAWVPYGVMHYSAPFIISFILFIFAPPGTLPVWARTFGYMNLFGVLIQMAFPCSPPWYENMYGLEPATYAVRGSPGGLARIDALFGTSIYTDGFSNSPVVFGAFPSLHAGWAMLEALFLSHVFPRYRFCFYGYVLWLCWCTMYLTHHYFVDLVGGMCLAIICFVFAQKLRLPQLQTGKILRWEYEFVIHGHGLSEKTSNSLARTGSPYLLGRDSFTQNPNAVAFMSGLNNMELANTDHEWSVGSSSPEPLPSPAADLIDRPASTTSSIFDASHLP.

Topologically, residues 1-47 (MSALSTLKKRLAACNRASQYKLETSLNPMPTFRLLRNTKWSWTHLQY) are cytoplasmic. The next 2 helical transmembrane spans lie at 48-68 (VFLA…GFWG) and 69-85 (KFGI…VPLT). Over 86–87 (RQ) the chain is Cytoplasmic. The chain crosses the membrane as a helical span at residues 88–108 (IFFPAIVIITWAILFYSCRFI). Residues 109–159 (PERWRPPIWVRVLPTLENILYGSNLSSLLSKTTHSILDILAWVPYGVMHYS) lie on the Lumenal side of the membrane. Asn-132 carries N-linked (GlcNAc...) asparagine glycosylation. A helical transmembrane segment spans residues 160 to 180 (APFIISFILFIFAPPGTLPVW). The Cytoplasmic portion of the chain corresponds to 181 to 183 (ART). A helical transmembrane segment spans residues 184-204 (FGYMNLFGVLIQMAFPCSPPW). Topologically, residues 205–245 (YENMYGLEPATYAVRGSPGGLARIDALFGTSIYTDGFSNSP) are lumenal. Residues 246–266 (VVFGAFPSLHAGWAMLEALFL) form a helical membrane-spanning segment. Residues 267–274 (SHVFPRYR) lie on the Cytoplasmic side of the membrane. A run of 2 helical transmembrane segments spans residues 275 to 292 (FCFY…MYLT) and 293 to 313 (HHYF…FVFA). At 314 to 422 (QKLRLPQLQT…SSIFDASHLP (109 aa)) the chain is on the cytoplasmic side. Ser-353 bears the Phosphoserine mark. The tract at residues 386–406 (EWSVGSSSPEPLPSPAADLID) is disordered.

This sequence belongs to the AUR1 family. Component of the inositol phosphorylceramide synthase complex composed of at least aur1 and kei1.

The protein resides in the golgi apparatus. It localises to the golgi stack membrane. Inhibited by aureobasidin A (AbA). Functionally, catalytic component of the inositol phosphorylceramide synthase which catalyzes the addition of a phosphorylinositol group onto ceramide to form inositol phosphorylceramide, an essential step in sphingolipid biosynthesis. The protein is Inositol phosphorylceramide synthase catalytic subunit aur1 (aur1) of Schizosaccharomyces pombe (strain 972 / ATCC 24843) (Fission yeast).